Consider the following 457-residue polypeptide: Gamma-aminobutyric acid receptor subunit gamma-4 (457 aa).

Positions 1-21 (MPAMVLLLCLALGPALRSARC) are cleaved as a signal peptide. The Extracellular portion of the chain corresponds to 22 to 256 (ESTEEYDYDY…VSFDLSRRMG (235 aa)). 2 N-linked (GlcNAc...) asparagine glycosylation sites follow: N35 and N112. C173 and C187 are disulfide-bonded. N230 carries an N-linked (GlcNAc...) asparagine glycan. 3 helical membrane passes run 257–279 (YFAI…SFWI), 283–305 (STPA…STIS), and 317–339 (AMDL…YATL). At 340 to 433 (NYLVGNKKPL…VRIHISRLDS (94 aa)) the chain is on the cytoplasmic side. A helical membrane pass occupies residues 434–457 (YSRVFFPTAFLLFNIVYWIAYLYL).

It belongs to the ligand-gated ion channel (TC 1.A.9) family. Gamma-aminobutyric acid receptor (TC 1.A.9.5) subfamily. GABRG4 sub-subfamily. Generally pentameric. There are five types of GABA(A) receptor chains: alpha, beta, gamma, delta, and rho. In terms of tissue distribution, abundant in several brain regions, including the ectostriatum, nucleus rotundus and hyperstriatum ventrale.

The protein resides in the postsynaptic cell membrane. Its subcellular location is the cell membrane. Functionally, GABA, the major inhibitory neurotransmitter in the vertebrate brain, mediates neuronal inhibition by binding to the GABA/benzodiazepine receptor and opening an integral chloride channel. The chain is Gamma-aminobutyric acid receptor subunit gamma-4 (GABRG4) from Gallus gallus (Chicken).